The following is a 1230-amino-acid chain: ATP-dependent helicase/nuclease subunit A (1230 aa).

The UvrD-like helicase ATP-binding domain occupies 9 to 480; sequence STWTDDQWKA…IDLNKNFRSR (472 aa). Position 30–37 (30–37) interacts with ATP; that stretch reads AAAGSGKT. In terms of domain architecture, UvrD-like helicase C-terminal spans 507–796; sequence QAELKLGASY…RLMTIHSSKG (290 aa).

The protein belongs to the helicase family. AddA subfamily. As to quaternary structure, heterodimer of AddA and AddB/RexB. The cofactor is Mg(2+).

It carries out the reaction Couples ATP hydrolysis with the unwinding of duplex DNA by translocating in the 3'-5' direction.. It catalyses the reaction ATP + H2O = ADP + phosphate + H(+). In terms of biological role, the heterodimer acts as both an ATP-dependent DNA helicase and an ATP-dependent, dual-direction single-stranded exonuclease. Recognizes the chi site generating a DNA molecule suitable for the initiation of homologous recombination. The AddA nuclease domain is required for chi fragment generation; this subunit has the helicase and 3' -&gt; 5' nuclease activities. In Bacillus licheniformis (strain ATCC 14580 / DSM 13 / JCM 2505 / CCUG 7422 / NBRC 12200 / NCIMB 9375 / NCTC 10341 / NRRL NRS-1264 / Gibson 46), this protein is ATP-dependent helicase/nuclease subunit A.